The sequence spans 384 residues: S-adenosylmethionine synthase (384 aa).

Residue histidine 15 coordinates ATP. Mg(2+) is bound at residue aspartate 17. Residue glutamate 43 coordinates K(+). Residues glutamate 56 and glutamine 99 each contribute to the L-methionine site. Residues 99–109 are flexible loop; the sequence is QSPDINQGVDR. Residues 164 to 166, 230 to 231, aspartate 239, 245 to 246, alanine 262, and lysine 266 each bind ATP; these read DAK, RF, and RK. Position 239 (aspartate 239) interacts with L-methionine. Lysine 270 serves as a coordination point for L-methionine.

It belongs to the AdoMet synthase family. Homotetramer; dimer of dimers. Mg(2+) is required as a cofactor. It depends on K(+) as a cofactor.

The protein localises to the cytoplasm. The catalysed reaction is L-methionine + ATP + H2O = S-adenosyl-L-methionine + phosphate + diphosphate. It participates in amino-acid biosynthesis; S-adenosyl-L-methionine biosynthesis; S-adenosyl-L-methionine from L-methionine: step 1/1. In terms of biological role, catalyzes the formation of S-adenosylmethionine (AdoMet) from methionine and ATP. The overall synthetic reaction is composed of two sequential steps, AdoMet formation and the subsequent tripolyphosphate hydrolysis which occurs prior to release of AdoMet from the enzyme. The sequence is that of S-adenosylmethionine synthase from Serratia proteamaculans (strain 568).